Consider the following 257-residue polypeptide: S-methyl-5'-thioadenosine phosphorylase (257 aa).

Residues S10 and 50–51 (RH) each bind phosphate. M180 lines the substrate pocket. Phosphate is bound at residue T181. 204–206 (DYD) is a binding site for substrate.

It belongs to the PNP/MTAP phosphorylase family. MTAP subfamily. In terms of assembly, homohexamer. Dimer of a homotrimer.

The catalysed reaction is S-methyl-5'-thioadenosine + phosphate = 5-(methylsulfanyl)-alpha-D-ribose 1-phosphate + adenine. The protein operates within amino-acid biosynthesis; L-methionine biosynthesis via salvage pathway; S-methyl-5-thio-alpha-D-ribose 1-phosphate from S-methyl-5'-thioadenosine (phosphorylase route): step 1/1. In terms of biological role, catalyzes the reversible phosphorylation of S-methyl-5'-thioadenosine (MTA) to adenine and 5-methylthioribose-1-phosphate. Involved in the breakdown of MTA, a major by-product of polyamine biosynthesis. Responsible for the first step in the methionine salvage pathway after MTA has been generated from S-adenosylmethionine. Has broad substrate specificity with 6-aminopurine nucleosides as preferred substrates. This is S-methyl-5'-thioadenosine phosphorylase from Pyrococcus horikoshii (strain ATCC 700860 / DSM 12428 / JCM 9974 / NBRC 100139 / OT-3).